The following is a 236-amino-acid chain: Leucyl/phenylalanyl-tRNA--protein transferase (236 aa).

Belongs to the L/F-transferase family.

The protein localises to the cytoplasm. The enzyme catalyses N-terminal L-lysyl-[protein] + L-leucyl-tRNA(Leu) = N-terminal L-leucyl-L-lysyl-[protein] + tRNA(Leu) + H(+). It carries out the reaction N-terminal L-arginyl-[protein] + L-leucyl-tRNA(Leu) = N-terminal L-leucyl-L-arginyl-[protein] + tRNA(Leu) + H(+). The catalysed reaction is L-phenylalanyl-tRNA(Phe) + an N-terminal L-alpha-aminoacyl-[protein] = an N-terminal L-phenylalanyl-L-alpha-aminoacyl-[protein] + tRNA(Phe). In terms of biological role, functions in the N-end rule pathway of protein degradation where it conjugates Leu, Phe and, less efficiently, Met from aminoacyl-tRNAs to the N-termini of proteins containing an N-terminal arginine or lysine. This chain is Leucyl/phenylalanyl-tRNA--protein transferase, found in Shewanella woodyi (strain ATCC 51908 / MS32).